The primary structure comprises 132 residues: Ribonuclease VapC15 (132 aa).

In terms of domain architecture, PINc spans Met-1–Arg-121. Position 96 (Asp-96) interacts with Mg(2+). 3 residues coordinate Mn(2+): Asp-96, Asp-114, and Asp-116.

Belongs to the PINc/VapC protein family. In terms of assembly, crystallizes as a VapB15-VapC15(2) heterotrimer and as a VapB15(2)-VapC15(2) heterotetramer; each toxin pair forms a homodimer which creates a channel in which the antitoxin binds. Mg(2+) serves as cofactor. Mn(2+) is required as a cofactor.

Its activity is regulated as follows. RNase activity inhibited by EDTA. Functionally, toxic component of a type II toxin-antitoxin (TA) system. Degrades total E.coli RNA, which is partially inhibited by cognate antitoxin VapB15. Upon expression in M.smegmatis inhibits colony formation, which is neutralized by coexpression with VapB15. This chain is Ribonuclease VapC15, found in Mycobacterium tuberculosis (strain ATCC 25618 / H37Rv).